Reading from the N-terminus, the 137-residue chain is Ribosome-binding factor A (137 aa).

This sequence belongs to the RbfA family. In terms of assembly, monomer. Binds 30S ribosomal subunits, but not 50S ribosomal subunits or 70S ribosomes.

It is found in the cytoplasm. One of several proteins that assist in the late maturation steps of the functional core of the 30S ribosomal subunit. Associates with free 30S ribosomal subunits (but not with 30S subunits that are part of 70S ribosomes or polysomes). Required for efficient processing of 16S rRNA. May interact with the 5'-terminal helix region of 16S rRNA. The sequence is that of Ribosome-binding factor A from Rhodopseudomonas palustris (strain TIE-1).